Reading from the N-terminus, the 1237-residue chain is Rho guanine nucleotide exchange factor 10-like protein (1237 aa).

Disordered stretches follow at residues 1 to 117 and 132 to 203; these read MASS…SSRR and YDDV…QPKM. Acidic residues predominate over residues 25 to 45; the sequence is EAEDDPGEGFEFDDSDDDEDT. The residue at position 39 (serine 39) is a Phosphoserine. Residues tyrosine 132 and tyrosine 153 each carry the phosphotyrosine modification. 2 stretches are compositionally biased toward basic and acidic residues: residues 146–163 and 184–194; these read EAER…RAPQ and EEAKPEAEPTK. The residue at position 241 (serine 241) is a Phosphoserine. In terms of domain architecture, DH spans 276-463; it reads VRRHILGSIV…ETLAEKLNEQ (188 aa). Disordered regions lie at residues 1091 to 1118 and 1142 to 1164; these read QEEA…PASH and PGPL…HSEE.

In terms of assembly, interacts with RHOA, RHOB and RHOC.

Its subcellular location is the cytoplasm. In terms of biological role, acts as a guanine nucleotide exchange factor (GEF) for RHOA, RHOB and RHOC. The chain is Rho guanine nucleotide exchange factor 10-like protein (ARHGEF10L) from Bos taurus (Bovine).